Reading from the N-terminus, the 480-residue chain is ATP-grasp enzyme ankG (480 aa).

The tract at residues 1-30 (MYQISLKATKSAAEPTSSTDASHDDRQVER) is disordered. A compositionally biased stretch (basic and acidic residues) spans 21-30 (ASHDDRQVER).

The catalysed reaction is NK13650 D + L-aspartate + ATP = NK13650 C + AMP + diphosphate + H(+). It catalyses the reaction NK13650 B + L-aspartate + ATP = NK13650 A + AMP + diphosphate + H(+). Its pathway is secondary metabolite biosynthesis. Its function is as follows. ATP-grasp enzyme; part of the ank cluster that mediates the biosynthesis of NK13650 C, a highly modified cyclo-arginine-tyrosine dipeptide. AnkG catalyzes the last step of the pathway via amidation NK13650 D with L-Asp to produce NK13650 C. AnkG also amidates NK13650 B into NK13650 A. Within the pathway, the cyclodipeptide synthase ankA acts as the scaffold-generating enzyme and is responsible for formation of the cyclo-Arg-Tyr diketopiperazine (cRY) from L-Arg and L-Tyr. The ankA product cRY is desaturated by the cytochrome P450 monooxygenase ankB to yield a dehydro-cyclodipeptide intermediate. The FAD-dependent monooxygenase ankC then installs the m-OH, ankD catalyzes the attachment of L-homoserine, and ankE ligates citrate to the ankD product to yield NK13650 B. The O-methyltransferase ankF is responsible for methylation of the C-17 phenol group of NK13650 B to produce NK13650 D. Amidation of NK13650 D with L-Asp by ankG then leads to the production of NK13650 C, whereas amidation of NK13650 B produces NK13650 A. The sequence is that of ATP-grasp enzyme ankG from Aspergillus thermomutatus (Neosartorya pseudofischeri).